The primary structure comprises 471 residues: MLPSWTIGLLLLATVRGKEICYQPFGCFSDETPWARTCHWPFKLFPWAPKDIDTHFLLYTNENPNNFQLINITNLDTIEASNFQLDRKTRFIIHGFIDKGEDSWPSEMCKKMFKVEKVNCICVDWRRGALTRYTQAVHNTRVVGAEIAFLIQGLSTKFDYNPENVHLIGHSLGAHTAAEAGRRLGGHVGRLTGLDPAQPCFQNTPEEVRLDPSDAMFVDVIHTDSAPFIPFLGFGMSQKVGHLDFYPNGGKEMPGCQKNTLSTIVDVDGIWEGIEDFAACNHLRSYKYYSSSIFSPDGFLGYPCASYDEFQEEENKCFPCPAEGCPKMGHYADQFQGKTSAVGQTFFLNTGDSGNFTRWRYRVSVTLAGKRNVHGYIRIALYGSNANSKQYNIFKGSLQPNARYTHDIDVDLNVGKVQKVKFLWYNHIIDLFHPELGASQVMVQSGEDKTEHKFCGSDTVRENILQTLNPC.

The first 17 residues, 1–17 (MLPSWTIGLLLLATVRG), serve as a signal peptide directing secretion. Cysteine 21 and cysteine 27 are joined by a disulfide. The N-linked (GlcNAc...) asparagine glycan is linked to asparagine 71. A required for galactolipase activity region spans residues 93-105 (IHGFIDKGEDSWP). A disulfide bridge connects residues cysteine 109 and cysteine 120. The Nucleophile role is filled by serine 171. Aspartate 195 (charge relay system) is an active-site residue. Ca(2+) is bound by residues glutamate 206, arginine 209, aspartate 211, and aspartate 214. Cysteine 256 and cysteine 280 are joined by a disulfide. Residues 257 to 279 (QKNTLSTIVDVDGIWEGIEDFAA) are required for galactolipase activity. Residue histidine 282 is the Charge relay system of the active site. Cystine bridges form between cysteine 304-cysteine 317 and cysteine 320-cysteine 325. An N-linked (GlcNAc...) asparagine glycan is attached at asparagine 355. In terms of domain architecture, PLAT spans 359–471 (WRYRVSVTLA…ENILQTLNPC (113 aa)). Cysteine 455 and cysteine 471 are oxidised to a cystine.

It belongs to the AB hydrolase superfamily. Lipase family.

It is found in the secreted. The protein localises to the zymogen granule membrane. Its subcellular location is the cell projection. It localises to the neuron projection. It carries out the reaction a triacylglycerol + H2O = a diacylglycerol + a fatty acid + H(+). The catalysed reaction is a 1,2-diacyl-3-O-(beta-D-galactosyl)-sn-glycerol + 2 H2O = 3-beta-D-galactosyl-sn-glycerol + 2 a fatty acid + 2 H(+). The enzyme catalyses 1,2,3-tri-(9Z-octadecenoyl)-glycerol + H2O = di-(9Z)-octadecenoylglycerol + (9Z)-octadecenoate + H(+). It catalyses the reaction di-(9Z)-octadecenoylglycerol + H2O = (9Z-octadecenoyl)-glycerol + (9Z)-octadecenoate + H(+). It carries out the reaction (9Z-octadecenoyl)-glycerol + H2O = glycerol + (9Z)-octadecenoate + H(+). The catalysed reaction is 1-(9Z-octadecenoyl)-glycerol + H2O = glycerol + (9Z)-octadecenoate + H(+). The enzyme catalyses 1,2,3-tripropanoylglycerol + H2O = dipropanoylglycerol + propanoate + H(+). It catalyses the reaction 1,2,3-tributanoylglycerol + H2O = dibutanoylglycerol + butanoate + H(+). It carries out the reaction 1,2,3-trioctanoylglycerol + H2O = dioctanoylglycerol + octanoate + H(+). The catalysed reaction is 1,2-didecanoylglycerol + H2O = decanoylglycerol + decanoate + H(+). The enzyme catalyses long chain 1,2-diacyl-3-O-beta-D-galactosyl-sn-glycerol + H2O = long chain acyl-3-O-beta-D-galactosyl-sn-glycerol + a fatty acid + H(+). It catalyses the reaction 1,2-dioctanoyl-3-O-beta-D-galactosyl-sn-glycerol + H2O = octanoyl-3-(beta-D-galactosyl)-sn-glycerol + octanoate + H(+). It carries out the reaction 1,2-didodecanoyl-3-beta-D-galactosyl-sn-glycerol + H2O = dodecanoyl-3-beta-D-galactosyl-sn-glycerol + dodecanoate + H(+). The catalysed reaction is 1-beta-D-galactosyl-2,3-didodecanoyl-sn-glycerol + H2O = 1-beta-D-galactosyl-dodecanoyl-sn-glycerol + dodecanoate + H(+). The enzyme catalyses a 1,2-diacyl-3-O-[alpha-D-galactosyl-(1-&gt;6)-beta-D-galactosyl]-sn-glycerol + H2O = acyl-3-O-[alpha-D-galactosyl-(1-&gt;6)-beta-D-galactosyl]-sn-glycerol + a fatty acid + H(+). It catalyses the reaction long chain 1,2-diacyl-3-O-[alpha-D-galactosyl-(1-&gt;6)-beta-D-galactosyl]-sn-glycerol + H2O = long chain acyl-3-O-[alpha-D-galactosyl-(1-&gt;6)-beta-D-galactosyl]-sn-glycerol + a fatty acid + H(+). It carries out the reaction 1,2-dioctanoyl-3-O-[alpha-D-galactosyl-(1-&gt;6)-beta-D-galactosyl]-sn-glycerol + H2O = octanoyl-3-O-[alpha-D-galactosyl-(1-&gt;6)-beta-D-galactosyl]-sn-glycerol + octanoate + H(+). The catalysed reaction is 1,2-didodecanoyl-3-O-[alpha-D-galactosyl-(1-&gt;6)-beta-D-galactosyl]-sn-glycerol + H2O = dodecanoyl-3-O-[alpha-D-galactosyl-(1-&gt;6)-beta-D-galactosyl]-sn-glycerol + dodecanoate + H(+). The enzyme catalyses a 1,2-diacyl-sn-glycero-3-phosphocholine + H2O = a monoacyl-sn-glycero-3-phosphocholine + a fatty acid + H(+). It functions in the pathway glycerolipid metabolism; triacylglycerol degradation. It participates in glycolipid metabolism. Its activity is regulated as follows. Up-regulated by CLPS in the presence of increasing concentrations of bile salts. Functionally, lipase that primarily hydrolyzes triglycerides and galactosylglycerides. In neonates, may play a major role in pancreatic digestion of dietary fats such as milk fat globules enriched in long-chain triglycerides. Hydrolyzes short-, medium- and long-chain fatty acyls in triglycerides without apparent positional specificity. Can completely deacylate triacylglycerols. When the liver matures and bile salt synthesis increases, likely functions mainly as a galactolipase and monoacylglycerol lipase. Hydrolyzes monogalactosyldiglycerols (MGDG) and digalactosyldiacylglycerols (DGDG) present in a plant-based diet, releasing long-chain polyunsaturated fatty acids. Hydrolyzes medium- and long-chain fatty acyls in galactolipids. May act together with LIPF to hydrolyze partially digested triglycerides. Hydrolyzes long-chain monoglycerides with high efficiency. In cytotoxic T cells, contributes to perforin-dependent cell lysis, but is unlikely to mediate direct cytotoxicity. Also has low phospholipase activity. In neurons, required for the localization of the phospholipid 1-oleoyl-2-palmitoyl-PC (OPPC) to neurite tips through acyl chain remodeling of membrane phospholipids. The resulting OPPC-rich lipid membrane domain recruits the t-SNARE protein STX4 by selectively interacting with the STX4 transmembrane domain and this promotes surface expression of the dopamine transporter SLC6A3/DAT at neurite tips by facilitating fusion of SLC6A3-containing transport vesicles with the plasma membrane. This is Pancreatic lipase-related protein 2 (PNLIPRP2) from Sus scrofa (Pig).